Reading from the N-terminus, the 448-residue chain is D-inositol 3-phosphate glycosyltransferase (448 aa).

1D-myo-inositol 3-phosphate contacts are provided by residues His-35, 46 to 51, Lys-104, Tyr-137, Thr-161, and Arg-181; that span reads DAGGLN. Residue Gly-49 coordinates UDP-N-acetyl-alpha-D-glucosamine. Positions 255, 260, and 321 each coordinate UDP-N-acetyl-alpha-D-glucosamine. Residues Tyr-330, Arg-331, and Ala-333 each contribute to the Mg(2+) site. UDP-N-acetyl-alpha-D-glucosamine-binding residues include Glu-343 and Glu-351. Thr-357 contacts Mg(2+).

It belongs to the glycosyltransferase group 1 family. MshA subfamily. Homodimer.

It carries out the reaction 1D-myo-inositol 3-phosphate + UDP-N-acetyl-alpha-D-glucosamine = 1D-myo-inositol 2-acetamido-2-deoxy-alpha-D-glucopyranoside 3-phosphate + UDP + H(+). Catalyzes the transfer of a N-acetyl-glucosamine moiety to 1D-myo-inositol 3-phosphate to produce 1D-myo-inositol 2-acetamido-2-deoxy-glucopyranoside 3-phosphate in the mycothiol biosynthesis pathway. The chain is D-inositol 3-phosphate glycosyltransferase from Acidothermus cellulolyticus (strain ATCC 43068 / DSM 8971 / 11B).